Here is a 255-residue protein sequence, read N- to C-terminus: 2-succinyl-6-hydroxy-2,4-cyclohexadiene-1-carboxylate synthase (255 aa).

This sequence belongs to the AB hydrolase superfamily. MenH family. In terms of assembly, monomer.

It catalyses the reaction 5-enolpyruvoyl-6-hydroxy-2-succinyl-cyclohex-3-ene-1-carboxylate = (1R,6R)-6-hydroxy-2-succinyl-cyclohexa-2,4-diene-1-carboxylate + pyruvate. It functions in the pathway quinol/quinone metabolism; 1,4-dihydroxy-2-naphthoate biosynthesis; 1,4-dihydroxy-2-naphthoate from chorismate: step 3/7. It participates in quinol/quinone metabolism; menaquinone biosynthesis. Its function is as follows. Catalyzes a proton abstraction reaction that results in 2,5-elimination of pyruvate from 2-succinyl-5-enolpyruvyl-6-hydroxy-3-cyclohexene-1-carboxylate (SEPHCHC) and the formation of 2-succinyl-6-hydroxy-2,4-cyclohexadiene-1-carboxylate (SHCHC). The protein is 2-succinyl-6-hydroxy-2,4-cyclohexadiene-1-carboxylate synthase of Serratia proteamaculans (strain 568).